A 402-amino-acid chain; its full sequence is Beta sliding clamp (402 aa).

Belongs to the beta sliding clamp family. As to quaternary structure, forms a ring-shaped head-to-tail homodimer around DNA which binds and tethers DNA polymerases and other proteins to the DNA. The DNA replisome complex has a single clamp-loading complex (3 tau and 1 each of delta, delta', psi and chi subunits) which binds 3 Pol III cores (1 core on the leading strand and 2 on the lagging strand) each with a beta sliding clamp dimer. Additional proteins in the replisome are other copies of gamma, psi and chi, Ssb, DNA helicase and RNA primase.

It localises to the cytoplasm. Functionally, confers DNA tethering and processivity to DNA polymerases and other proteins. Acts as a clamp, forming a ring around DNA (a reaction catalyzed by the clamp-loading complex) which diffuses in an ATP-independent manner freely and bidirectionally along dsDNA. Initially characterized for its ability to contact the catalytic subunit of DNA polymerase III (Pol III), a complex, multichain enzyme responsible for most of the replicative synthesis in bacteria; Pol III exhibits 3'-5' exonuclease proofreading activity. The beta chain is required for initiation of replication as well as for processivity of DNA replication. This chain is Beta sliding clamp (dnaN), found in Mycobacterium bovis (strain ATCC BAA-935 / AF2122/97).